Reading from the N-terminus, the 367-residue chain is MGDFVFCYGLHNKNRLSKYIKQTKKGYKLYLDDDNHIKIKIETRSGQKYIVIDFNDSLDFLKFIVKKKIYCDEYKHDCNSLCLHNDYLEYVIENKHYDIVKFYCKKFVPLIKSNISVYPFSFSLFVDIDLDDFKYMFKYSCLEDINPYFIYVLGQSDNITIEFMDDIIGMYKSKLTRLFTNNKISDSNIDNIKIGLQDFIKPVYKKDDVNLFDFIIEEIHNLTSEIDKTKLYKKQLGFLKIFEFYYELDTKTINRFINYVLDCTCQKIFERLLFNLGNIDLLDKTIVRDILEFNMVEYMGIICDFIGDTNPELINKMLTKATSTEMAQLLIDCGADYEKLYKSQNFRKCNDCVKNFIKKLVKETSDS.

The protein belongs to the mimivirus L17x/L18x family.

This is an uncharacterized protein from Acanthamoeba polyphaga (Amoeba).